Consider the following 458-residue polypeptide: UDP-N-acetylmuramate--L-alanine ligase (458 aa).

112 to 118 serves as a coordination point for ATP; the sequence is GMHGKTT.

The protein belongs to the MurCDEF family.

Its subcellular location is the cytoplasm. The enzyme catalyses UDP-N-acetyl-alpha-D-muramate + L-alanine + ATP = UDP-N-acetyl-alpha-D-muramoyl-L-alanine + ADP + phosphate + H(+). The protein operates within cell wall biogenesis; peptidoglycan biosynthesis. Its function is as follows. Cell wall formation. The polypeptide is UDP-N-acetylmuramate--L-alanine ligase (Acidobacterium capsulatum (strain ATCC 51196 / DSM 11244 / BCRC 80197 / JCM 7670 / NBRC 15755 / NCIMB 13165 / 161)).